A 424-amino-acid polypeptide reads, in one-letter code: Neurotensin receptor type 1 (424 aa).

The segment at 1 to 23 (MHLNSSVPQGTPGEPDAQPFSGP) is disordered. The Extracellular portion of the chain corresponds to 1-68 (MHLNSSVPQG…TDIYSKVLVT (68 aa)). 3 N-linked (GlcNAc...) asparagine glycosylation sites follow: Asn-4, Asn-38, and Asn-42. A helical membrane pass occupies residues 69–89 (AIYLALFVVGTVGNSVTAFTL). The Cytoplasmic segment spans residues 90–103 (ARKKSLQSLQSTVH). The helical transmembrane segment at 104-123 (YHLGSLALSDLLILLLAMPV) threads the bilayer. Over 124–143 (ELYNFIWVHHPWAFGDAGCR) the chain is Extracellular. A disulfide bond links Cys-142 and Cys-225. A helical membrane pass occupies residues 144-165 (GYYFLRDACTYATALNVASLSV). The Cytoplasmic portion of the chain corresponds to 166–185 (ERYLAICHPFKAKTLMSRSR). The helical transmembrane segment at 186 to 206 (TKKFISAIWLASALLAIPMLF) threads the bilayer. Topologically, residues 207–235 (TMGLQNRSGDGTHPGGLVCTPIVDTATVK) are extracellular. Residues 236–260 (VVIQVNTFMSFLFPMLVISILNTVI) traverse the membrane as a helical segment. The Cytoplasmic segment spans residues 261–308 (ANKLTVMVHQAAEQGRVCTVGTHNGLEHSTFNMTIEPGRVQALRHGVL). The helical transmembrane segment at 309-330 (VLRAVVIAFVVCWLPYHVRRLM) threads the bilayer. A neurotensin binding region spans residues 326 to 349 (VRRLMFCYISDEQWTTFLFDFYHY). At 331-348 (FCYISDEQWTTFLFDFYH) the chain is on the extracellular side. Residues 349 to 369 (YFYMLTNALFYVSSAINPILY) form a helical membrane-spanning segment. The Cytoplasmic portion of the chain corresponds to 370–424 (NLVSANFRQVFLSTLACLCPGWRHRRKKRPTFSRKPNSMSSNHAFSTSATRETLY). Residues Cys-386 and Cys-388 are each lipidated (S-palmitoyl cysteine). The interval 397-424 (KRPTFSRKPNSMSSNHAFSTSATRETLY) is disordered. Polar residues predominate over residues 403–424 (RKPNSMSSNHAFSTSATRETLY).

It belongs to the G-protein coupled receptor 1 family. Neurotensin receptor subfamily. NTSR1 sub-subfamily. As to quaternary structure, interacts (palmitoylated form) with GNA11. Post-translationally, N-glycosylated. Palmitoylated; this is required for normal localization at membrane rafts and normal GNA11-mediated activation of down-stream signaling cascades. The palmitoylation level increases in response to neurotensin treatment. In terms of tissue distribution, detected in brain and small intestine.

It is found in the cell membrane. Its subcellular location is the membrane raft. Its function is as follows. G-protein coupled receptor for the tridecapeptide neurotensin (NTS). Signaling is effected via G proteins that activate a phosphatidylinositol-calcium second messenger system. Signaling leads to the activation of downstream MAP kinases and protects cells against apoptosis. This Rattus norvegicus (Rat) protein is Neurotensin receptor type 1 (Ntsr1).